We begin with the raw amino-acid sequence, 340 residues long: Gallate dioxygenase (340 aa).

His-45 serves as the catalytic Proton donor. His-113 (proton acceptor) is an active-site residue.

The protein belongs to the LigB/MhpB extradiol dioxygenase family. The cofactor is Fe(2+).

The catalysed reaction is 3,4,5-trihydroxybenzoate + O2 = (1E)-4-oxobut-1-ene-1,2,4-tricarboxylate + 2 H(+). In terms of biological role, ring-cleavage dioxygenase that acts specifically on gallate to produce the keto-tautomer of 4-oxalomesaconate. Mediates the first step of gallate degradation pathway. The protein is Gallate dioxygenase (galA) of Pseudomonas putida (strain ATCC 47054 / DSM 6125 / CFBP 8728 / NCIMB 11950 / KT2440).